Reading from the N-terminus, the 626-residue chain is Grainyhead-like protein 3 homolog (626 aa).

The segment at 30–95 (EAWKTYLENP…QGKRYYHGME (66 aa)) is transcription activation. The region spanning 226 to 460 (SLKSDFEYTL…DLETPPVLFI (235 aa)) is the Grh/CP2 DB domain.

The protein belongs to the grh/CP2 family. Grainyhead subfamily. In terms of assembly, homodimer, also forms heterodimers with GRHL1 and GRHL2. Interacts with LMO4. In terms of tissue distribution, expressed in brain, colon, pancreas, placenta and kidney. Isoform 1 is expressed in lung and tonsil. Isoform 2 is prostate-specific.

It localises to the nucleus. Transcription factor playing important roles in primary neurulation and in the differentiation of stratified epithelia of both ectodermal and endodermal origin. Binds directly to the consensus DNA sequence 5'-AACCGGTT-3' acting as an activator and repressor on distinct target genes. xhibits functional redundancy with GRHL2 in epidermal morphogenetic events and epidermal wound repair. Exhibits functional redundancy with GRHL2 in epidermal morphogenetic events and epidermal wound repair but is essential to form the epidermal barrier with TGM3 as critical direct target gene among others. Despite being dispensable during normal epidermal homeostasis in the adulthood, is again required for barrier repair after immune-mediated epidermal damage, regulates distinct gene batteries in embryonic epidermal differentiation and adult epidermal barrier reformation after injury. Plays unique and cooperative roles with GRHL2 in establishing distinct zones of primary neurulation. Essential for spinal closure, functions cooperatively with GRHL2 in closure 2 (forebrain/midbrain boundary) and posterior neuropore closure. Also required for proper development of the oral periderm. No genetic interaction with GRHL3, no functional cooperativity due to diverse target gene selectivity. This is Grainyhead-like protein 3 homolog from Homo sapiens (Human).